The chain runs to 340 residues: Guanine nucleotide-binding protein G(I)/G(S)/G(T) subunit beta-3 (340 aa).

WD repeat units follow at residues 53-83 (GHLA…IVWD), 95-125 (LRSS…SIYN), 141-170 (AHTG…ALWD), 182-212 (GHTG…KLWD), 224-254 (GHES…RLFD), 268-298 (SIIC…NVWD), and 310-340 (GHDN…KIWN).

This sequence belongs to the WD repeat G protein beta family. G proteins are composed of 3 units, alpha, beta and gamma. Interacts with RASD2.

Functionally, guanine nucleotide-binding proteins (G proteins) are involved as a modulator or transducer in various transmembrane signaling systems. The beta and gamma chains are required for the GTPase activity, for replacement of GDP by GTP, and for G protein-effector interaction. The chain is Guanine nucleotide-binding protein G(I)/G(S)/G(T) subunit beta-3 (GNB3) from Homo sapiens (Human).